Here is a 633-residue protein sequence, read N- to C-terminus: Bifunctional enzyme CysN/CysC (633 aa).

A sulfate adenylyltransferase region spans residues 1 to 463 (MSHQSDLISE…REERAGRFGQ (463 aa)). The tr-type G domain occupies 22-241 (KELLRFLTCG…TVEIAADRNL (220 aa)). Residues 31–38 (GNVDDGKS) are G1. Residue 31-38 (GNVDDGKS) coordinates GTP. The tract at residues 89-93 (GITID) is G2. The G3 stretch occupies residues 110-113 (DTPG). GTP contacts are provided by residues 110–114 (DTPGH) and 165–168 (NKMD). The tract at residues 165-168 (NKMD) is G4. Positions 204-206 (SAL) are G5. The segment at 464–633 (QPATVLFSGL…LDLLRERQAI (170 aa)) is adenylyl-sulfate kinase. 472–479 (GLSGAGKS) provides a ligand contact to ATP.

The protein in the C-terminal section; belongs to the APS kinase family. In the N-terminal section; belongs to the TRAFAC class translation factor GTPase superfamily. Classic translation factor GTPase family. CysN/NodQ subfamily. In terms of assembly, heterodimer composed of CysD, the smaller subunit, and CysNC.

The catalysed reaction is sulfate + ATP + H(+) = adenosine 5'-phosphosulfate + diphosphate. It catalyses the reaction adenosine 5'-phosphosulfate + ATP = 3'-phosphoadenylyl sulfate + ADP + H(+). Its pathway is sulfur metabolism; hydrogen sulfide biosynthesis; sulfite from sulfate: step 1/3. It participates in sulfur metabolism; hydrogen sulfide biosynthesis; sulfite from sulfate: step 2/3. Functionally, with CysD forms the ATP sulfurylase (ATPS) that catalyzes the adenylation of sulfate producing adenosine 5'-phosphosulfate (APS) and diphosphate, the first enzymatic step in sulfur assimilation pathway. APS synthesis involves the formation of a high-energy phosphoric-sulfuric acid anhydride bond driven by GTP hydrolysis by CysN coupled to ATP hydrolysis by CysD. In terms of biological role, APS kinase catalyzes the synthesis of activated sulfate. This Pseudomonas aeruginosa (strain ATCC 15692 / DSM 22644 / CIP 104116 / JCM 14847 / LMG 12228 / 1C / PRS 101 / PAO1) protein is Bifunctional enzyme CysN/CysC (cysNC).